A 62-amino-acid chain; its full sequence is MAEPQDMWRCQMVNCGYVYDPDRGDKRRKVPAGTKFEDLPEDWRCPVCGAGKKSFRRLSDEA.

The region spanning 7-58 (MWRCQMVNCGYVYDPDRGDKRRKVPAGTKFEDLPEDWRCPVCGAGKKSFRRL) is the Rubredoxin-like domain. Positions 10, 15, 45, and 48 each coordinate Fe cation.

This sequence belongs to the rubredoxin family. Monomer. Fe(3+) is required as a cofactor.

Rubredoxin is a small nonheme, iron protein lacking acid-labile sulfide. Its single Fe, chelated to 4 Cys, functions as an electron acceptor and may also stabilize the conformation of the molecule. In Desulfovibrio desulfuricans (strain ATCC 27774 / DSM 6949 / MB), this protein is Rubredoxin-2 (rd2).